Reading from the N-terminus, the 203-residue chain is Outer-membrane lipoprotein LolB (203 aa).

A signal peptide spans 1-16 (MKTFLPCLFFLLILVG). Cysteine 17 carries the N-palmitoyl cysteine lipid modification. Residue cysteine 17 is the site of S-diacylglycerol cysteine attachment.

It belongs to the LolB family. In terms of assembly, monomer.

Its subcellular location is the cell outer membrane. Its function is as follows. Plays a critical role in the incorporation of lipoproteins in the outer membrane after they are released by the LolA protein. This is Outer-membrane lipoprotein LolB from Psychromonas ingrahamii (strain DSM 17664 / CCUG 51855 / 37).